Here is a 159-residue protein sequence, read N- to C-terminus: NADH-quinone oxidoreductase subunit B (159 aa).

Cys-37, Cys-38, Cys-102, and Cys-132 together coordinate [4Fe-4S] cluster.

This sequence belongs to the complex I 20 kDa subunit family. As to quaternary structure, NDH-1 is composed of 14 different subunits. Subunits NuoB, C, D, E, F, and G constitute the peripheral sector of the complex. Requires [4Fe-4S] cluster as cofactor.

The protein resides in the cell inner membrane. It carries out the reaction a quinone + NADH + 5 H(+)(in) = a quinol + NAD(+) + 4 H(+)(out). Functionally, NDH-1 shuttles electrons from NADH, via FMN and iron-sulfur (Fe-S) centers, to quinones in the respiratory chain. The immediate electron acceptor for the enzyme in this species is believed to be ubiquinone. Couples the redox reaction to proton translocation (for every two electrons transferred, four hydrogen ions are translocated across the cytoplasmic membrane), and thus conserves the redox energy in a proton gradient. The polypeptide is NADH-quinone oxidoreductase subunit B (Variovorax paradoxus (strain S110)).